The primary structure comprises 287 residues: ATP synthase gamma chain (287 aa).

The protein belongs to the ATPase gamma chain family. As to quaternary structure, F-type ATPases have 2 components, CF(1) - the catalytic core - and CF(0) - the membrane proton channel. CF(1) has five subunits: alpha(3), beta(3), gamma(1), delta(1), epsilon(1). CF(0) has three main subunits: a, b and c.

The protein localises to the cell inner membrane. Produces ATP from ADP in the presence of a proton gradient across the membrane. The gamma chain is believed to be important in regulating ATPase activity and the flow of protons through the CF(0) complex. The protein is ATP synthase gamma chain of Marinobacter nauticus (strain ATCC 700491 / DSM 11845 / VT8) (Marinobacter aquaeolei).